Consider the following 319-residue polypeptide: Thioredoxin reductase (319 aa).

FAD contacts are provided by residues 11–14 (SGPA), 40–41 (VA), Gln45, Asn54, Val87, Cys145, Asp288, and 295–297 (RQA). Cys142 and Cys145 form a disulfide bridge.

This sequence belongs to the class-II pyridine nucleotide-disulfide oxidoreductase family. In terms of assembly, homodimer. FAD is required as a cofactor.

The protein localises to the cytoplasm. The catalysed reaction is [thioredoxin]-dithiol + NADP(+) = [thioredoxin]-disulfide + NADPH + H(+). In Eremothecium gossypii (strain ATCC 10895 / CBS 109.51 / FGSC 9923 / NRRL Y-1056) (Yeast), this protein is Thioredoxin reductase (TRR1).